Consider the following 802-residue polypeptide: Fibroblast growth factor receptor 4 (802 aa).

The first 21 residues, 1–21 (MRLLLALLGVLLSVPGPPVLS), serve as a signal peptide directing secretion. The Ig-like C2-type 1 domain occupies 22–118 (LEASEEVELE…VLQNLTLITG (97 aa)). Residues 22 to 369 (LEASEEVELE…AAAPEARYTD (348 aa)) lie on the Extracellular side of the membrane. Cysteines 57 and 101 form a disulfide. Residue asparagine 112 is glycosylated (N-linked (GlcNAc...) asparagine). The tract at residues 119–148 (DSLTSSNDDEDPKSHRDPSNRHSYPQQAPY) is disordered. 2 consecutive Ig-like C2-type domains span residues 152 to 240 (PQRM…YLLD) and 249 to 349 (PILQ…AWLT). A disulfide bridge connects residues cysteine 172 and cysteine 224. N-linked (GlcNAc...) asparagine glycosylation is found at asparagine 258, asparagine 290, asparagine 311, and asparagine 322. The cysteines at positions 271 and 333 are disulfide-linked. A helical transmembrane segment spans residues 370–390 (IILYASGSLALAVLLLLAGLY). Tyrosine 390 bears the Phosphotyrosine; in variant R-388 mark. At 391-802 (RGQALHGRHP…SFPFGSGVQT (412 aa)) the chain is on the cytoplasmic side. The Protein kinase domain maps to 467–755 (LVLGKPLGEG…VLLAVSEEYL (289 aa)). ATP contacts are provided by residues 473-481 (LGEGCFGQV) and lysine 503. At serine 573 the chain carries Phosphoserine. Aspartate 612 serves as the catalytic Proton acceptor. 3 positions are modified to phosphotyrosine; by autocatalysis: tyrosine 642, tyrosine 643, and tyrosine 754.

Belongs to the protein kinase superfamily. Tyr protein kinase family. Fibroblast growth factor receptor subfamily. As to quaternary structure, monomer. Homodimer after ligand binding. Interacts with FGF1, FGF2, FGF4, FGF6, FGF8, FGF9, FGF16, FGF17, FGF18, FGF19, FGF21 and FGF23 (in vitro). Binding affinity for FGF family members is enhanced by interactions between FGFs and heparan sulfate proteoglycans. Interacts with KLB; this strongly increases the affinity for FGF19 and FGF23. Affinity for FGF19 is strongly increased by KLB and sulfated glycosaminoglycans. KLB and KL both interact with the core-glycosylated FGFR4 in the endoplasmic reticulum and promote its degradation, so that only FGFR4 with fully mature N-glycans is expressed at the cell surface. Identified in a complex with NCAM1, CDH2, PLCG1, FRS2, SRC, SHC1, GAP43 and CTTN. Interacts with MMP14 and HIP1. Interacts with STAT3. Post-translationally, N-glycosylated. Full maturation of the glycan chains in the Golgi is essential for high affinity interaction with FGF19. In terms of processing, ubiquitinated. Subject to proteasomal degradation when not fully glycosylated. Autophosphorylated. Binding of FGF family members together with heparan sulfate proteoglycan or heparin promotes receptor dimerization and autophosphorylation on tyrosine residues. Autophosphorylation occurs in trans between the two FGFR molecules present in the dimer. In terms of tissue distribution, expressed in gastrointestinal epithelial cells, pancreas, and gastric and pancreatic cancer cell lines.

Its subcellular location is the cell membrane. It localises to the endosome. It is found in the endoplasmic reticulum. The protein localises to the secreted. It carries out the reaction L-tyrosyl-[protein] + ATP = O-phospho-L-tyrosyl-[protein] + ADP + H(+). Present in an inactive conformation in the absence of bound ligand. Ligand binding leads to dimerization and activation by autophosphorylation on tyrosine residues. In terms of biological role, tyrosine-protein kinase that acts as a cell-surface receptor for fibroblast growth factors and plays a role in the regulation of cell proliferation, differentiation and migration, and in regulation of lipid metabolism, bile acid biosynthesis, glucose uptake, vitamin D metabolism and phosphate homeostasis. Required for normal down-regulation of the expression of CYP7A1, the rate-limiting enzyme in bile acid synthesis, in response to FGF19. Phosphorylates PLCG1 and FRS2. Ligand binding leads to the activation of several signaling cascades. Activation of PLCG1 leads to the production of the cellular signaling molecules diacylglycerol and inositol 1,4,5-trisphosphate. Phosphorylation of FRS2 triggers recruitment of GRB2, GAB1, PIK3R1 and SOS1, and mediates activation of RAS, MAPK1/ERK2, MAPK3/ERK1 and the MAP kinase signaling pathway, as well as of the AKT1 signaling pathway. Promotes SRC-dependent phosphorylation of the matrix protease MMP14 and its lysosomal degradation. FGFR4 signaling is down-regulated by receptor internalization and degradation; MMP14 promotes internalization and degradation of FGFR4. Mutations that lead to constitutive kinase activation or impair normal FGFR4 inactivation lead to aberrant signaling. The protein is Fibroblast growth factor receptor 4 (FGFR4) of Homo sapiens (Human).